Consider the following 235-residue polypeptide: Proteasome subunit alpha (235 aa).

The protein belongs to the peptidase T1A family. The 20S proteasome core is composed of 14 alpha and 14 beta subunits that assemble into four stacked heptameric rings, resulting in a barrel-shaped structure. The two inner rings, each composed of seven catalytic beta subunits, are sandwiched by two outer rings, each composed of seven alpha subunits. The catalytic chamber with the active sites is on the inside of the barrel. Has a gated structure, the ends of the cylinder being occluded by the N-termini of the alpha-subunits. Is capped by the proteasome-associated ATPase, ARC.

The protein localises to the cytoplasm. It participates in protein degradation; proteasomal Pup-dependent pathway. The formation of the proteasomal ATPase ARC-20S proteasome complex, likely via the docking of the C-termini of ARC into the intersubunit pockets in the alpha-rings, may trigger opening of the gate for substrate entry. Interconversion between the open-gate and close-gate conformations leads to a dynamic regulation of the 20S proteasome proteolysis activity. Functionally, component of the proteasome core, a large protease complex with broad specificity involved in protein degradation. In Paenarthrobacter aurescens (strain TC1), this protein is Proteasome subunit alpha.